The sequence spans 609 residues: Dihydroxy-acid dehydratase (609 aa).

D81 provides a ligand contact to Mg(2+). C122 is a [2Fe-2S] cluster binding site. The Mg(2+) site is built by D123 and K124. K124 bears the N6-carboxylysine mark. A [2Fe-2S] cluster-binding site is contributed by C195. Residue E491 participates in Mg(2+) binding. The active-site Proton acceptor is the S517.

This sequence belongs to the IlvD/Edd family. As to quaternary structure, homodimer. It depends on [2Fe-2S] cluster as a cofactor. Mg(2+) is required as a cofactor.

It carries out the reaction (2R)-2,3-dihydroxy-3-methylbutanoate = 3-methyl-2-oxobutanoate + H2O. The enzyme catalyses (2R,3R)-2,3-dihydroxy-3-methylpentanoate = (S)-3-methyl-2-oxopentanoate + H2O. It functions in the pathway amino-acid biosynthesis; L-isoleucine biosynthesis; L-isoleucine from 2-oxobutanoate: step 3/4. The protein operates within amino-acid biosynthesis; L-valine biosynthesis; L-valine from pyruvate: step 3/4. In terms of biological role, functions in the biosynthesis of branched-chain amino acids. Catalyzes the dehydration of (2R,3R)-2,3-dihydroxy-3-methylpentanoate (2,3-dihydroxy-3-methylvalerate) into 2-oxo-3-methylpentanoate (2-oxo-3-methylvalerate) and of (2R)-2,3-dihydroxy-3-methylbutanoate (2,3-dihydroxyisovalerate) into 2-oxo-3-methylbutanoate (2-oxoisovalerate), the penultimate precursor to L-isoleucine and L-valine, respectively. This is Dihydroxy-acid dehydratase from Acinetobacter baumannii (strain ATCC 17978 / DSM 105126 / CIP 53.77 / LMG 1025 / NCDC KC755 / 5377).